We begin with the raw amino-acid sequence, 143 residues long: Small ribosomal subunit protein uS12 (143 aa).

Pro-62 carries the post-translational modification Hydroxyproline.

Belongs to the universal ribosomal protein uS12 family. In terms of assembly, component of the 40S small ribosomal subunit.

It is found in the cytoplasm. It localises to the cytosol. The protein localises to the rough endoplasmic reticulum. This Caenorhabditis elegans protein is Small ribosomal subunit protein uS12 (rps-23).